A 705-amino-acid chain; its full sequence is Choline transporter-like protein 2 (705 aa).

At 1–31 (MEDQRKYGAYGTPQKYDPTFKGPIYNRGCTD) the chain is on the cytoplasmic side. Position 12 is a phosphothreonine (T12). Residues 32 to 52 (VLCCVLLFLAIVGYVAVGLIA) traverse the membrane as a helical segment. At 53–231 (WTHGDPRKVI…RIFEDYTVSW (179 aa)) the chain is on the extracellular side. N-linked (GlcNAc...) asparagine glycans are attached at residues N186 and N199. A helical membrane pass occupies residues 232–252 (YWIVIGLVIAMVLSLLFIILL). Residues 253-255 (RFL) lie on the Cytoplasmic side of the membrane. A helical transmembrane segment spans residues 256–276 (AGIMVWVMIVLVILVLGYGIF). The Extracellular segment spans residues 277-314 (HCYMEYARLRGEAGSDISVLDLGFQTDFRVYLHLRQTW). Residues 315 to 335 (LAFMIILSILEVIIILLLIFL) form a helical membrane-spanning segment. At 336 to 363 (RKRILIAIALIKEASRAVGYVMCSLLYP) the chain is on the cytoplasmic side. A helical transmembrane segment spans residues 364–384 (LVTFFLLCLCIAYWASTAVFL). The Extracellular portion of the chain corresponds to 385-455 (STSNEAVYKI…IFNAFMFFWL (71 aa)). N-linked (GlcNAc...) asparagine glycosylation is present at N414. A helical membrane pass occupies residues 456-478 (ANFVLALGQVTLAGAFASYYWAL). At 479–503 (RKPDDMPAFPLFAAFGRALRYHTGS) the chain is on the cytoplasmic side. Residues 504 to 524 (LAFGSLILAIVQIIRVILEYL) form a helical membrane-spanning segment. At 525 to 562 (DQRLKAAENKFAKFLMTCLKCCFWCLEKFIKFLNRNAY) the chain is on the extracellular side. A helical membrane pass occupies residues 563 to 583 (IMIAIYGTNFCTSARNAFFLL). The Cytoplasmic segment spans residues 584–598 (MRNIIRVAVLDKVTD). A helical transmembrane segment spans residues 599–619 (FLFLLGKLLIVGSVGILAFFF). Residues 620-637 (FTHRIRIVQDTAPPLNYY) are Extracellular-facing. A helical transmembrane segment spans residues 638–658 (WVPILTVIVGSYLIAHGFFSV). Residues 659 to 705 (YGMCVDTLFLCFLEDLERNNGSSERPYFMSSTLKKLLNKTNKKPVES) lie on the Cytoplasmic side of the membrane.

This sequence belongs to the CTL (choline transporter-like) family. In terms of assembly, interacts with COCH. N-glycosylated; contains sialic acid. Not O-glycosylated. Expressed at high levels in lung, colon and in supporting cells of the inner ear (at protein level). Progressively lower levels in brain, tongue, liver and kidney (at protein level). In the tongue, strongly expressed in epithelial cells and in nerves within the musculature. Within the nerves, expression observed in the perineurial cells of the nerve sheath, in the Schwann cells and myelinated nerve fibers (at protein level). In the kidney, prominent expression in glomeruli in the lining of Bowman's capsule and on the mesangial cells adjacent to the vessels within the glomerulus (at protein level). Strongly expressed on the membranes of splenocytes (at protein level).

Its subcellular location is the cell membrane. The protein resides in the mitochondrion outer membrane. It catalyses the reaction choline(out) + n H(+)(in) = choline(in) + n H(+)(out). The catalysed reaction is ethanolamine(out) + n H(+)(in) = ethanolamine(in) + n H(+)(out). In terms of biological role, choline/H+ antiporter, mainly in mitochodria. Also acts as a low-affinity ethanolamine/H+ antiporter, regulating the supply of extracellular ethanolamine (Etn) for the CDP-Etn pathway, redistribute intracellular Etn and balance the CDP-Cho and CDP-Etn arms of the Kennedy pathway. This Cavia porcellus (Guinea pig) protein is Choline transporter-like protein 2 (SLC44A2).